The chain runs to 212 residues: Dephospho-CoA kinase (212 aa).

Residues Ile4 to Thr204 enclose the DPCK domain. Cys12–Val17 is a binding site for ATP.

It belongs to the CoaE family.

It localises to the cytoplasm. It carries out the reaction 3'-dephospho-CoA + ATP = ADP + CoA + H(+). Its pathway is cofactor biosynthesis; coenzyme A biosynthesis; CoA from (R)-pantothenate: step 5/5. Functionally, catalyzes the phosphorylation of the 3'-hydroxyl group of dephosphocoenzyme A to form coenzyme A. The chain is Dephospho-CoA kinase from Blochmanniella pennsylvanica (strain BPEN).